We begin with the raw amino-acid sequence, 397 residues long: Cysteine desulfurase (397 aa).

Pyridoxal 5'-phosphate is bound by residues Asn148, Gln176, and 196 to 198 (SAH). Lys199 carries the post-translational modification N6-(pyridoxal phosphate)lysine. Residue Thr234 participates in pyridoxal 5'-phosphate binding. Cys321 (cysteine persulfide intermediate) is an active-site residue. Residue Cys321 coordinates [2Fe-2S] cluster.

This sequence belongs to the class-V pyridoxal-phosphate-dependent aminotransferase family. NifS/IscS subfamily. In terms of assembly, homodimer. The cofactor is pyridoxal 5'-phosphate.

The catalysed reaction is (sulfur carrier)-H + L-cysteine = (sulfur carrier)-SH + L-alanine. In terms of biological role, catalyzes the removal of elemental sulfur atoms from cysteine to produce alanine. Seems to participate in the biosynthesis of the nitrogenase metalloclusters by providing the inorganic sulfur required for the Fe-S core formation. This chain is Cysteine desulfurase, found in Klebsiella pneumoniae.